We begin with the raw amino-acid sequence, 827 residues long: DNA gyrase subunit A (827 aa).

A Topo IIA-type catalytic domain is found at 38 to 501 (LPDARDGLKP…SYENIDIEDL (464 aa)). Tyrosine 126 functions as the O-(5'-phospho-DNA)-tyrosine intermediate in the catalytic mechanism. The short motif at 528–534 (QNRGGKG) is the GyrA-box element.

This sequence belongs to the type II topoisomerase GyrA/ParC subunit family. In terms of assembly, heterotetramer, composed of two GyrA and two GyrB chains. In the heterotetramer, GyrA contains the active site tyrosine that forms a transient covalent intermediate with DNA, while GyrB binds cofactors and catalyzes ATP hydrolysis.

The protein resides in the cytoplasm. The enzyme catalyses ATP-dependent breakage, passage and rejoining of double-stranded DNA.. Functionally, a type II topoisomerase that negatively supercoils closed circular double-stranded (ds) DNA in an ATP-dependent manner to modulate DNA topology and maintain chromosomes in an underwound state. Negative supercoiling favors strand separation, and DNA replication, transcription, recombination and repair, all of which involve strand separation. Also able to catalyze the interconversion of other topological isomers of dsDNA rings, including catenanes and knotted rings. Type II topoisomerases break and join 2 DNA strands simultaneously in an ATP-dependent manner. The sequence is that of DNA gyrase subunit A from Helicobacter pylori (strain ATCC 700392 / 26695) (Campylobacter pylori).